A 412-amino-acid chain; its full sequence is GATOR complex protein NPRL2 (412 aa).

The protein belongs to the NPR2 family. In terms of assembly, component of the GATOR complex consisting of mio, Nup44A/Seh1, Im11, Nplr3, Nplr2, Wdr24, Wdr59 and Sec13. Within the GATOR complex, probable component of the GATOR1 subcomplex which is likely composed of Iml1, Nplr2 and Nplr3. Interacts with Nprl3.

The protein localises to the cytoplasm. The protein resides in the lysosome. An essential component of the GATOR subcomplex GATOR1 which functions as an inhibitor of the amino acid-sensing branch of the TORC1 signaling pathway. The two GATOR subcomplexes, GATOR1 and GATOR2, regulate the TORC1 pathway in order to mediate metabolic homeostasis, female gametogenesis and the response to amino acid limitation and complete starvation. The function of GATOR1 in negatively regulating the TORC1 pathway is essential for maintaining baseline levels of TORC1 activity under nutrient rich conditions, and for promoting survival during amino acid or complete starvation by inhibiting TORC1-dependent cell growth and promoting catabolic metabolism and autophagy. In addition, this inhibition of TORC1 is necessary to maintain female fertility under normal conditions and during periods of nutrient stress. GATOR1 and GATOR2 act at different stages of oogenesis to regulate TORC1 in order to control meiotic entry and promote oocyte growth and development. After exactly four mitotic cyst divisions, the GATOR1 complex members (Iml1, Nprl2 and Nprl3) down-regulate TORC1 to slow cellular metabolism and promote the mitotic/meiotic transition. At later stages of oogenesis, the mio and Nup44A components of the GATOR2 complex inhibit GATOR1 and thus activate TORC1 to promote meiotic progression, and drive oocyte growth and development. This chain is GATOR complex protein NPRL2, found in Drosophila melanogaster (Fruit fly).